Consider the following 616-residue polypeptide: KIF-binding protein (616 aa).

Positions 52 to 78 (EEEEESEAEGKEERRDGPESGGRRGES) are disordered. The segment covering 59–78 (AEGKEERRDGPESGGRRGES) has biased composition (basic and acidic residues).

The protein belongs to the KIF-binding protein family.

Its subcellular location is the cytoplasm. It is found in the cytoskeleton. In terms of biological role, activator of KIF1B plus-end-directed microtubule motor activity. Required for organization of axonal microtubules, and axonal outgrowth and maintenance during peripheral and central nervous system development. This chain is KIF-binding protein, found in Xenopus tropicalis (Western clawed frog).